An 83-amino-acid chain; its full sequence is UPF0298 protein SERP0712 (83 aa).

Belongs to the UPF0298 family.

The protein localises to the cytoplasm. The chain is UPF0298 protein SERP0712 from Staphylococcus epidermidis (strain ATCC 35984 / DSM 28319 / BCRC 17069 / CCUG 31568 / BM 3577 / RP62A).